Reading from the N-terminus, the 294-residue chain is ATP synthase gamma chain (294 aa).

This sequence belongs to the ATPase gamma chain family. In terms of assembly, F-type ATPases have 2 components, CF(1) - the catalytic core - and CF(0) - the membrane proton channel. CF(1) has five subunits: alpha(3), beta(3), gamma(1), delta(1), epsilon(1). CF(0) has three main subunits: a, b and c.

Its subcellular location is the cell inner membrane. Produces ATP from ADP in the presence of a proton gradient across the membrane. The gamma chain is believed to be important in regulating ATPase activity and the flow of protons through the CF(0) complex. This Campylobacter jejuni (strain RM1221) protein is ATP synthase gamma chain.